The sequence spans 160 residues: Periplasmic nitrate reductase, electron transfer subunit (160 aa).

Positions 1 to 25 are cleaved as a signal peptide; that stretch reads MKTRIIFAALALAAAMPLLVSGVFA. 8 residues coordinate heme c: H73, C87, C90, H91, H108, C127, C130, and H131.

Belongs to the NapB family. As to quaternary structure, component of the periplasmic nitrate reductase NapAB complex composed of NapA and NapB. In terms of processing, binds 2 heme C groups per subunit.

It is found in the periplasm. Electron transfer subunit of the periplasmic nitrate reductase complex NapAB. Receives electrons from the membrane-anchored tetraheme c-type NapC protein and transfers these to NapA subunit, thus allowing electron flow between membrane and periplasm. Essential for periplasmic nitrate reduction with nitrate as the terminal electron acceptor. The sequence is that of Periplasmic nitrate reductase, electron transfer subunit from Azospirillum brasilense.